The chain runs to 205 residues: Small ribosomal subunit protein uS5 (205 aa).

The segment at 1-25 is disordered; it reads MSGAQRGQRGGERRGGRDDRRGQGA. Residues 9 to 24 show a composition bias toward basic and acidic residues; sequence RGGERRGGRDDRRGQG. The S5 DRBM domain occupies 30–93; that stretch reads YIERVVAINR…EEAKKHFFRV (64 aa).

This sequence belongs to the universal ribosomal protein uS5 family. In terms of assembly, part of the 30S ribosomal subunit. Contacts proteins S4 and S8.

With S4 and S12 plays an important role in translational accuracy. Its function is as follows. Located at the back of the 30S subunit body where it stabilizes the conformation of the head with respect to the body. The chain is Small ribosomal subunit protein uS5 from Nocardioides sp. (strain ATCC BAA-499 / JS614).